Consider the following 106-residue polypeptide: MIKSELVQRIAEHNPHLYQRDVENIVNAILEEIVSALARGDRVELRGFGAFSVKHRPARAGRNPRTGEHVPVEQKSVPFFKTGKEMRERLNRDGLDGATPPSPPAA.

The disordered stretch occupies residues 57-106 (PARAGRNPRTGEHVPVEQKSVPFFKTGKEMRERLNRDGLDGATPPSPPAA). Over residues 82–95 (TGKEMRERLNRDGL) the composition is skewed to basic and acidic residues.

This sequence belongs to the bacterial histone-like protein family. As to quaternary structure, heterodimer of an alpha and a beta chain.

Its function is as follows. This protein is one of the two subunits of integration host factor, a specific DNA-binding protein that functions in genetic recombination as well as in transcriptional and translational control. The sequence is that of Integration host factor subunit beta from Afipia carboxidovorans (strain ATCC 49405 / DSM 1227 / KCTC 32145 / OM5) (Oligotropha carboxidovorans).